The chain runs to 534 residues: NAD(P)H-quinone oxidoreductase chain 4 1 (534 aa).

14 consecutive transmembrane segments (helical) span residues 6–26, 34–54, 87–107, 113–133, 136–156, 169–189, 209–229, 243–263, 277–297, 311–331, 332–352, 376–396, 418–438, and 464–484; these read IPWL…IPLI, IRWY…TAFW, LSMP…LAAW, PKLF…VFAV, LLLF…LISI, FILY…ALAF, ALEL…LPIF, SAPV…YGLI, FAPL…LTAF, ISHM…GMNG, AVLQ…LSGV, FAMF…SGFV, IAIF…LSML, and IFVA…PKLA.

This sequence belongs to the complex I subunit 4 family.

It localises to the cellular thylakoid membrane. The catalysed reaction is a plastoquinone + NADH + (n+1) H(+)(in) = a plastoquinol + NAD(+) + n H(+)(out). It catalyses the reaction a plastoquinone + NADPH + (n+1) H(+)(in) = a plastoquinol + NADP(+) + n H(+)(out). Its function is as follows. NDH-1 shuttles electrons from NAD(P)H, via FMN and iron-sulfur (Fe-S) centers, to quinones in the respiratory chain. The immediate electron acceptor for the enzyme in this species is believed to be plastoquinone. Couples the redox reaction to proton translocation (for every two electrons transferred, four hydrogen ions are translocated across the cytoplasmic membrane), and thus conserves the redox energy in a proton gradient. The sequence is that of NAD(P)H-quinone oxidoreductase chain 4 1 from Picosynechococcus sp. (strain ATCC 27264 / PCC 7002 / PR-6) (Agmenellum quadruplicatum).